Consider the following 433-residue polypeptide: uncharacterized protein (433 aa).

It is found in the virion. This is an uncharacterized protein from Acanthamoeba polyphaga (Amoeba).